The primary structure comprises 338 residues: Cytochrome bd ubiquinol oxidase subunit 2 (338 aa).

9 helical membrane passes run 7-27, 50-70, 75-95, 119-139, 163-183, 196-216, 227-247, 256-276, and 306-326; these read LWFILVAVLFVGFFFLEGFDF, IGPFWDANEVWLLTGAGAIFA, WYATMLSGYYIPFVIVLLALM, VVFFGSLIPPFVLGVLFTTLF, ILGGVTVTLLCFQHGLMFITL, MAQKIMGVVFVAVLAFAALSA, EITIPLAVLIVICFMLAAVFI, FGMTGAGLALTVGMIFISLFP, and IAALTLLPFVIGSQIWSYYVF.

It belongs to the cytochrome ubiquinol oxidase subunit 2 family. As to quaternary structure, heterodimer of subunits I and II. The cofactor is heme b. Heme d cis-diol serves as cofactor.

It is found in the cell membrane. It catalyses the reaction 2 a ubiquinol + O2(in) + 4 H(+)(in) = 2 a ubiquinone + 2 H2O(in) + 4 H(+)(out). The sequence is that of Cytochrome bd ubiquinol oxidase subunit 2 (cydB) from Bacillus subtilis (strain 168).